Consider the following 535-residue polypeptide: Proto-oncogene tyrosine-protein kinase Src (535 aa).

Positions M1–P56 are disordered. G2 is lipidated: N-myristoyl glycine. A compositionally biased stretch (basic and acidic residues) spans K7–E19. Phosphoserine is present on residues S17, S21, and S74. Residues G83–S144 enclose the SH3 domain. Positions W150–C247 constitute an SH2 domain. The residue at position 186 (Y186) is a Phosphotyrosine. One can recognise a Protein kinase domain in the interval L269–F522. Residues L275 to V283 and K297 contribute to the ATP site. D388 acts as the Proton acceptor in catalysis. Y418 is subject to Phosphotyrosine; by autocatalysis. A Phosphotyrosine; by FAK2 modification is found at Y418. Residue Y529 is modified to Phosphotyrosine; by CSK.

Belongs to the protein kinase superfamily. Tyr protein kinase family. SRC subfamily. In terms of assembly, part of a complex comprised of PTPRA, BCAR1, BCAR3 (via SH2 domain) and SRC; the formation of the complex is dependent on integrin mediated-tyrosine phosphorylation of PTPRA. Interacts with CDCP1, TGFB1I1 and TOM1L2. Interacts with DDEF1/ASAP1 via its SH3 domain. Interacts with CCPG1. Interacts with the cytoplasmic domain of MUC1, phosphorylates it and increases binding of MUC1 with beta-catenin. Interacts with RALGPS1 via its SH3 domain. Interacts with CAV2 (tyrosine phosphorylated form). Interacts (via the SH3 domain and the protein kinase domain) with ARRB1; the interaction is independent of the phosphorylation state of SRC C-terminus. Interacts with FCAMR and PXN. Interacts with ARRB2. Interacts with ARRB1. Interacts with SRCIN1. Interacts with NDFIP2 and more weakly with NDFIP1. Interacts with PIK3CA and/or PIK3C2B, PTK2/FAK1, ESR1 (dimethylated on arginine) and FAK. Interacts (via SH2 and SH3 domain) with TNK2. Interacts (via protein kinase domain) with the tyrosine phosphorylated form of RUNX3 (via runt domain). Interacts with TRAF3 (via RING-type zinc finger domain). Interacts with RIGI, MAVS and TBK1. Interacts (via SH2 domain) with RACK1; the interaction is enhanced by tyrosine phosphorylation of RACK1 and inhibits SRC activity. Interacts (via SH2 domain) with the 'Tyr-402' phosphorylated form of PTK2B/PYK2. Interacts (via SH2 domain) with FLT3 (tyrosine phosphorylated). Identified in a complex containing FGFR4, NCAM1, CDH2, PLCG1, FRS2, SRC, SHC1, GAP43 and CTTN. Interacts with EPHB1; activates the MAPK/ERK cascade to regulate cell migration. Interacts with ERBB2 and STAT1. Interacts with PDGFRA (tyrosine phosphorylated). Interacts with CSF1R. Interacts (via SH2 domain) with the 'Tyr-9' phosphorylated form of PDPK1. Interacts with DDR2. Interacts with AMOTL2; this interaction regulates the translocation of phosphorylated SRC to peripheral cell-matrix adhesion sites. Interacts with DDR1 and DAB2. Interacts with TRAP1. Interacts with CBLC; the interaction is enhanced when SRC is phosphorylated at 'Tyr-424'. Interacts with ARHGEF5. Interacts (via cytoplasmic domain) with CEACAM1 (via SH2 domain); this interaction is regulated by trans-homophilic cell adhesion. Interacts with MPP2. Interacts with PRR7. Interacts (via kinase domain and to a lesser extent the SH2 domain) directly with PDLIM4; this interaction results in PTPN13-mediated dephosphorylation of this protein leading to its inactivation. Interacts with P85 (PIK3R1 or PIK3R2). Interacts with HNRNPA2B1. Interacts with IL6ST/gp130. Interacts (via SH3 domain) with PELP1 in the presence of 17-beta-estradiol. Interacts with AMBRA1. Myristoylated at Gly-2, and this is essential for targeting to membranes. Post-translationally, dephosphorylated at Tyr-529 by PTPRJ. Phosphorylated on Tyr-529 by c-Src kinase (CSK). The phosphorylated form is termed pp60c-src. Dephosphorylated by PTPRJ at Tyr-418. Normally maintained in an inactive conformation with the SH2 domain engaged with Tyr-529, the SH3 domain engaged with the SH2-kinase linker, and Tyr-418 dephosphorylated. Dephosphorylation of Tyr-529 as a result of protein tyrosine phosphatase (PTP) action disrupts the intramolecular interaction between the SH2 domain and Tyr-529, Tyr-418 can then become autophosphorylated, resulting in SRC activation. Phosphorylation of Tyr-529 by CSK allows this interaction to reform, resulting in SRC inactivation. CDK5-mediated phosphorylation at Ser-74 targets SRC to ubiquitin-dependent degradation and thus leads to cytoskeletal reorganization. Phosphorylated by PTK2/FAK1; this enhances kinase activity. Phosphorylated by PTK2B/PYK2; this enhances kinase activity. Upon activation of IL6ST by IL6, Tyr-418 is phosphorylated and Tyr-529 dephosphorylated. In terms of processing, displays reduced levels of autophosphorylation at Tyr-418 compared to isoform 2. Displays enhanced levels of autophosphorylation at Tyr-418 compared to isoform 1. Post-translationally, S-nitrosylation is important for activation of its kinase activity. In terms of processing, ubiquitinated in response to CDK5-mediated phosphorylation. Ubiquitination mediated by CBLC requires SRC autophosphorylation at Tyr-418 and may lead to lysosomal degradation.

It localises to the cell membrane. The protein localises to the mitochondrion inner membrane. The protein resides in the nucleus. Its subcellular location is the cytoplasm. It is found in the cytoskeleton. It localises to the perinuclear region. The protein localises to the cell junction. The protein resides in the focal adhesion. It carries out the reaction L-tyrosyl-[protein] + ATP = O-phospho-L-tyrosyl-[protein] + ADP + H(+). With respect to regulation, phosphorylation by CSK at Tyr-529 inhibits kinase activity. Inhibitory phosphorylation at Tyr-529 is enhanced by heme. Further phosphorylation by CDK1 partially reactivates CSK-inactivated SRC and facilitates complete reactivation by protein tyrosine phosphatase PTPRC. Integrin engagement stimulates kinase activity. Phosphorylation by PTK2/FAK1 enhances kinase activity. Butein and pseudosubstrate-based peptide inhibitors like CIYKYYF act as inhibitors. Phosphorylation at Tyr-418 increases kinase activity. Functionally, non-receptor protein tyrosine kinase which is activated following engagement of many different classes of cellular receptors including immune response receptors, integrins and other adhesion receptors, receptor protein tyrosine kinases, G protein-coupled receptors as well as cytokine receptors. Participates in signaling pathways that control a diverse spectrum of biological activities including gene transcription, immune response, cell adhesion, cell cycle progression, apoptosis, migration, and transformation. Due to functional redundancy between members of the SRC kinase family, identification of the specific role of each SRC kinase is very difficult. SRC appears to be one of the primary kinases activated following engagement of receptors and plays a role in the activation of other protein tyrosine kinase (PTK) families. Receptor clustering or dimerization leads to recruitment of SRC to the receptor complexes where it phosphorylates the tyrosine residues within the receptor cytoplasmic domains. Plays an important role in the regulation of cytoskeletal organization through phosphorylation of specific substrates such as AFAP1. Phosphorylation of AFAP1 allows the SRC SH2 domain to bind AFAP1 and to localize to actin filaments. Cytoskeletal reorganization is also controlled through the phosphorylation of cortactin (CTTN). When cells adhere via focal adhesions to the extracellular matrix, signals are transmitted by integrins into the cell resulting in tyrosine phosphorylation of a number of focal adhesion proteins, including PTK2/FAK1 and paxillin (PXN). In addition to phosphorylating focal adhesion proteins, SRC is also active at the sites of cell-cell contact adherens junctions and phosphorylates substrates such as beta-catenin (CTNNB1), delta-catenin (CTNND1), and plakoglobin (JUP). Another type of cell-cell junction, the gap junction, is also a target for SRC, which phosphorylates connexin-43 (GJA1). SRC is implicated in regulation of pre-mRNA-processing and phosphorylates RNA-binding proteins such as KHDRBS1. Phosphorylates PKP3 at 'Tyr-195' in response to reactive oxygen species, which may cause the release of PKP3 from desmosome cell junctions into the cytoplasm. Also plays a role in PDGF-mediated tyrosine phosphorylation of both STAT1 and STAT3, leading to increased DNA binding activity of these transcription factors. Involved in the RAS pathway through phosphorylation of RASA1 and RASGRF1. Plays a role in EGF-mediated calcium-activated chloride channel activation. Required for epidermal growth factor receptor (EGFR) internalization through phosphorylation of clathrin heavy chain (CLTC and CLTCL1) at 'Tyr-1477'. Involved in beta-arrestin (ARRB1 and ARRB2) desensitization through phosphorylation and activation of GRK2, leading to beta-arrestin phosphorylation and internalization. Has a critical role in the stimulation of the CDK20/MAPK3 mitogen-activated protein kinase cascade by epidermal growth factor. Might be involved not only in mediating the transduction of mitogenic signals at the level of the plasma membrane but also in controlling progression through the cell cycle via interaction with regulatory proteins in the nucleus. Plays an important role in osteoclastic bone resorption in conjunction with PTK2B/PYK2. Both the formation of a SRC-PTK2B/PYK2 complex and SRC kinase activity are necessary for this function. Recruited to activated integrins by PTK2B/PYK2, thereby phosphorylating CBL, which in turn induces the activation and recruitment of phosphatidylinositol 3-kinase to the cell membrane in a signaling pathway that is critical for osteoclast function. Promotes energy production in osteoclasts by activating mitochondrial cytochrome C oxidase. Phosphorylates DDR2 on tyrosine residues, thereby promoting its subsequent autophosphorylation. Phosphorylates RUNX3 and COX2 on tyrosine residues, TNK2 on 'Tyr-284' and CBL on 'Tyr-738'. Enhances RIGI-elicited antiviral signaling. Phosphorylates PDPK1 at 'Tyr-9', 'Tyr-373' and 'Tyr-376'. Phosphorylates BCAR1 at 'Tyr-226'. Phosphorylates CBLC at multiple tyrosine residues, phosphorylation at 'Tyr-341' activates CBLC E3 activity. Phosphorylates synaptic vesicle protein synaptophysin (SYP). Involved in anchorage-independent cell growth. Required for podosome formation. Mediates IL6 signaling by activating YAP1-NOTCH pathway to induce inflammation-induced epithelial regeneration. Phosphorylates OTUB1, promoting deubiquitination of RPTOR. Non-receptor protein tyrosine kinase which phosphorylates synaptophysin with high affinity. Its function is as follows. Non-receptor protein tyrosine kinase which shows higher basal kinase activity than isoform 1, possibly due to weakened intramolecular interactions which enhance autophosphorylation of Tyr-418 and subsequent activation. The SH3 domain shows reduced affinity with the linker sequence between the SH2 and kinase domains which may account for the increased basal activity. Displays altered substrate specificity compared to isoform 1, showing weak affinity for synaptophysin and for peptide substrates containing class I or class II SH3 domain-binding motifs. Plays a role in L1CAM-mediated neurite elongation, possibly by acting downstream of L1CAM to drive cytoskeletal rearrangements involved in neurite outgrowth. The polypeptide is Proto-oncogene tyrosine-protein kinase Src (Mus musculus (Mouse)).